The primary structure comprises 206 residues: Large ribosomal subunit protein uL3 (206 aa).

The disordered stretch occupies residues 127–151 (SGGPSSHGSKFHRHLGGTGQATTPA).

The protein belongs to the universal ribosomal protein uL3 family. In terms of assembly, part of the 50S ribosomal subunit. Forms a cluster with proteins L14 and L19.

Functionally, one of the primary rRNA binding proteins, it binds directly near the 3'-end of the 23S rRNA, where it nucleates assembly of the 50S subunit. This is Large ribosomal subunit protein uL3 from Borreliella burgdorferi (strain ZS7) (Borrelia burgdorferi).